Here is a 156-residue protein sequence, read N- to C-terminus: Small ribosomal subunit protein uS7 (156 aa).

This sequence belongs to the universal ribosomal protein uS7 family. Part of the 30S ribosomal subunit. Contacts proteins S9 and S11.

In terms of biological role, one of the primary rRNA binding proteins, it binds directly to 16S rRNA where it nucleates assembly of the head domain of the 30S subunit. Is located at the subunit interface close to the decoding center, probably blocks exit of the E-site tRNA. In Magnetococcus marinus (strain ATCC BAA-1437 / JCM 17883 / MC-1), this protein is Small ribosomal subunit protein uS7.